A 692-amino-acid chain; its full sequence is Ino eighty subunit 1 (692 aa).

Residues 1 to 25 (MGKRVYDPIHDTFQLREDNSDETKA) show a composition bias toward basic and acidic residues. The segment at 1-133 (MGKRVYDPIH…RHLKKPDGEP (133 aa)) is disordered. A Phosphoserine modification is found at serine 27. Over residues 28-56 (PMQSVKSGSQEEASPSSIQSETETVTTKS) the composition is skewed to polar residues. The span at 64–80 (EIDDKNDDDSTQSEEEN) shows a compositional bias: acidic residues. A compositionally biased stretch (polar residues) spans 97–109 (GASTATGPVTTNT). A coiled-coil region spans residues 340–385 (SKYVEVESKAQEQDMVDEQNEVKETEAENEKQESKAAYATTLFDIL). Residues 465–485 (FMSKMEEGRKRERTNVTEVKK) are compositionally biased toward basic and acidic residues. Residues 465–550 (FMSKMEEGRK…VTPAAPTETE (86 aa)) are disordered. Phosphoserine is present on residues serine 487, serine 493, and serine 504. Acidic residues predominate over residues 493-504 (SEEDGEGEDDKS). Threonine 507 is subject to Phosphothreonine. A compositionally biased stretch (polar residues) spans 513 to 528 (SLLTPTPILESSSPMT).

Component of the chromatin-remodeling INO80 complex, at least composed of ARP4, ARP5, ARP8, RVB1, RVB2, TAF14, NHP10, IES1, IES3, IES4, IES6, ACT1, IES2, IES5 and INO80.

It is found in the nucleus. Functionally, probably involved in transcription regulation via its interaction with the INO80 complex, a chromatin-remodeling complex. This is Ino eighty subunit 1 (IES1) from Saccharomyces cerevisiae (strain ATCC 204508 / S288c) (Baker's yeast).